We begin with the raw amino-acid sequence, 333 residues long: Eukaryotic translation initiation factor 2 subunit 2 (333 aa).

Disordered stretches follow at residues 1 to 119 (MSGD…DLDI) and 139 to 164 (ILEK…NQTG). Serine 2 is modified (N-acetylserine). Phosphoserine is present on residues serine 2 and serine 13. The span at 13 to 22 (SKKKKKKKKP) shows a compositional bias: basic residues. Phosphothreonine occurs at positions 31 and 36. Residues 40–51 (ETKEVEPEPTED) are compositionally biased toward basic and acidic residues. At serine 67 the chain carries Phosphoserine. Positions 96–105 (EGVKDLKIES) are enriched in basic and acidic residues. A Glycyl lysine isopeptide (Lys-Gly) (interchain with G-Cter in SUMO2) cross-link involves residue lysine 102. Phosphoserine is present on serine 105. Acidic residues-rich tracts occupy residues 106–118 (DVQE…DDLD) and 139–149 (ILEKDEALEDE). Residue threonine 111 is modified to Phosphothreonine. Residues serine 158 and serine 218 each carry the phosphoserine modification. Residues lysine 265 and lysine 293 each carry the N6-acetyllysine modification. The C4-type zinc finger occupies 281-305 (CHTCRSPDTILQKDTRLYFLQCETC).

This sequence belongs to the eIF-2-beta/eIF-5 family. In terms of assembly, eukaryotic translation initiation factor 2 eIF2 is a heterotrimeric complex composed of an alpha (EIF2S1), a beta (EIF2S2) and a gamma (EIF2S3) chain. eIF2 is member of the 43S pre-initiation complex (43S PIC). eIF2 forms a complex with at least CELF1/CUGBP1, CALR, CALR3, EIF2S1, EIF2S2, HSP90B1 and HSPA5. Interacts with BZW2/5MP1. Interacts with EIF5.

The protein localises to the cytoplasm. It localises to the cytosol. Component of the eIF2 complex that functions in the early steps of protein synthesis by forming a ternary complex with GTP and initiator tRNA. This complex binds to a 40S ribosomal subunit, followed by mRNA binding to form the 43S pre-initiation complex (43S PIC). Junction of the 60S ribosomal subunit to form the 80S initiation complex is preceded by hydrolysis of the GTP bound to eIF2 and release of an eIF2-GDP binary complex. In order for eIF2 to recycle and catalyze another round of initiation, the GDP bound to eIF2 must exchange with GTP by way of a reaction catalyzed by eIF2B. The chain is Eukaryotic translation initiation factor 2 subunit 2 (EIF2S2) from Pongo abelii (Sumatran orangutan).